We begin with the raw amino-acid sequence, 385 residues long: Putative F-box protein At1g49610 (385 aa).

Residues 25-73 enclose the F-box domain; sequence VDSISSLPDVILQENLSLIPTKFAIRTSVLSKRWRHVWSETPSLDFDDC.

The sequence is that of Putative F-box protein At1g49610 from Arabidopsis thaliana (Mouse-ear cress).